The sequence spans 907 residues: Translation initiation factor IF-2 (907 aa).

The interval 26–317 (DAGMKKSSSD…KPKSMQHGFD (292 aa)) is disordered. Composition is skewed to basic and acidic residues over residues 28 to 44 (GMKKSSSDQVSDEEKQK) and 101 to 248 (SAIE…DTDY). The segment covering 299 to 308 (KGGRKGKLSK) has biased composition (basic residues). The 170-residue stretch at 406 to 575 (PRAPVVTIMG…LLQAEVLELT (170 aa)) folds into the tr-type G domain. The G1 stretch occupies residues 415-422 (GHVDHGKT). 415-422 (GHVDHGKT) provides a ligand contact to GTP. A G2 region spans residues 440–444 (GITQH). A G3 region spans residues 461-464 (DTPG). Residues 461-465 (DTPGH) and 515-518 (NKID) contribute to the GTP site. The interval 515 to 518 (NKID) is G4. Residues 551–553 (SAK) form a G5 region.

The protein belongs to the TRAFAC class translation factor GTPase superfamily. Classic translation factor GTPase family. IF-2 subfamily.

The protein resides in the cytoplasm. One of the essential components for the initiation of protein synthesis. Protects formylmethionyl-tRNA from spontaneous hydrolysis and promotes its binding to the 30S ribosomal subunits. Also involved in the hydrolysis of GTP during the formation of the 70S ribosomal complex. The chain is Translation initiation factor IF-2 from Vibrio vulnificus (strain CMCP6).